The chain runs to 235 residues: 2-C-methyl-D-erythritol 4-phosphate cytidylyltransferase (235 aa).

Belongs to the IspD/TarI cytidylyltransferase family. IspD subfamily.

The catalysed reaction is 2-C-methyl-D-erythritol 4-phosphate + CTP + H(+) = 4-CDP-2-C-methyl-D-erythritol + diphosphate. It participates in isoprenoid biosynthesis; isopentenyl diphosphate biosynthesis via DXP pathway; isopentenyl diphosphate from 1-deoxy-D-xylulose 5-phosphate: step 2/6. Its function is as follows. Catalyzes the formation of 4-diphosphocytidyl-2-C-methyl-D-erythritol from CTP and 2-C-methyl-D-erythritol 4-phosphate (MEP). The sequence is that of 2-C-methyl-D-erythritol 4-phosphate cytidylyltransferase from Ectopseudomonas mendocina (strain ymp) (Pseudomonas mendocina).